A 229-amino-acid polypeptide reads, in one-letter code: AA9 family lytic polysaccharide monooxygenase E (229 aa).

Positions 1–19 (MRSSDITFVLLSVVATVRS) are cleaved as a signal peptide. His20 lines the Cu(2+) pocket. Cys57 and Cys178 are oxidised to a cystine. N-linked (GlcNAc...) asparagine glycosylation occurs at Asn76. His99 contacts Cu(2+). Positions 164 and 173 each coordinate O2. Tyr175 serves as a coordination point for Cu(2+). Asn217 carries N-linked (GlcNAc...) asparagine glycosylation.

This sequence belongs to the polysaccharide monooxygenase AA9 family. The cofactor is Cu(2+).

Its subcellular location is the secreted. It catalyses the reaction [(1-&gt;4)-beta-D-glucosyl]n+m + reduced acceptor + O2 = 4-dehydro-beta-D-glucosyl-[(1-&gt;4)-beta-D-glucosyl]n-1 + [(1-&gt;4)-beta-D-glucosyl]m + acceptor + H2O.. Functionally, lytic polysaccharide monooxygenase (LPMO) that depolymerizes crystalline and amorphous polysaccharides via the oxidation of scissile alpha- or beta-(1-4)-glycosidic bonds, yielding C1 and C4 oxidation products. Catalysis by LPMOs requires the reduction of the active-site copper from Cu(II) to Cu(I) by a reducing agent and H(2)O(2) or O(2) as a cosubstrate. In Botryotinia fuckeliana (strain B05.10) (Noble rot fungus), this protein is AA9 family lytic polysaccharide monooxygenase E.